Here is a 612-residue protein sequence, read N- to C-terminus: MACPF domain-containing protein NSL1 (612 aa).

The region spanning 5 to 338 (NFTRLDAHSA…PPIEELHQFL (334 aa)) is the MACPF domain.

Belongs to the complement C6/C7/C8/C9 (TC 1.C.39) family.

Its function is as follows. Negatively controls the salicylic acid (SA)-mediated pathway of programmed cell death in plant immunity. The polypeptide is MACPF domain-containing protein NSL1 (NSL1) (Arabidopsis thaliana (Mouse-ear cress)).